The sequence spans 252 residues: Trans-aconitate 2-methyltransferase (252 aa).

The protein belongs to the methyltransferase superfamily. Tam family.

It is found in the cytoplasm. It catalyses the reaction trans-aconitate + S-adenosyl-L-methionine = (E)-3-(methoxycarbonyl)pent-2-enedioate + S-adenosyl-L-homocysteine. Catalyzes the S-adenosylmethionine monomethyl esterification of trans-aconitate. The sequence is that of Trans-aconitate 2-methyltransferase from Shigella dysenteriae serotype 1 (strain Sd197).